The sequence spans 901 residues: HTH-type transcriptional regulator MalT (901 aa).

39 to 46 is an ATP binding site; it reads SPAGYGKT. One can recognise an HTH luxR-type domain in the interval 829–894; sequence ELIRTSPLTQ…AAVQHAQKLL (66 aa). A DNA-binding region (H-T-H motif) is located at residues 853 to 872; it reads NEQIAGELEVAATTIKTHIR.

Belongs to the MalT family. Monomer in solution. Oligomerizes to an active state in the presence of the positive effectors ATP and maltotriose.

Activated by ATP and maltotriose, which are both required for DNA binding. Positively regulates the transcription of the maltose regulon whose gene products are responsible for uptake and catabolism of malto-oligosaccharides. Specifically binds to the promoter region of its target genes, recognizing a short DNA motif called the MalT box. The protein is HTH-type transcriptional regulator MalT of Shigella flexneri serotype 5b (strain 8401).